Consider the following 260-residue polypeptide: Acetylglutamate kinase (260 aa).

Residues 46-47, arginine 68, and asparagine 160 each bind substrate; that span reads GG.

It belongs to the acetylglutamate kinase family. ArgB subfamily.

The protein localises to the cytoplasm. The enzyme catalyses N-acetyl-L-glutamate + ATP = N-acetyl-L-glutamyl 5-phosphate + ADP. It functions in the pathway amino-acid biosynthesis; L-arginine biosynthesis; N(2)-acetyl-L-ornithine from L-glutamate: step 2/4. In terms of biological role, catalyzes the ATP-dependent phosphorylation of N-acetyl-L-glutamate. The protein is Acetylglutamate kinase of Shewanella sp. (strain MR-4).